Here is a 427-residue protein sequence, read N- to C-terminus: Citrate synthase (427 aa).

Catalysis depends on residues His-306 and Asp-363.

It belongs to the citrate synthase family. In terms of assembly, homohexamer.

The enzyme catalyses oxaloacetate + acetyl-CoA + H2O = citrate + CoA + H(+). It functions in the pathway carbohydrate metabolism; tricarboxylic acid cycle; isocitrate from oxaloacetate: step 1/2. With respect to regulation, allosterically inhibited by NADH. The sequence is that of Citrate synthase (gltA) from Salmonella typhimurium (strain LT2 / SGSC1412 / ATCC 700720).